A 273-amino-acid chain; its full sequence is Spore development regulator vosA (273 aa).

Residues 66–75 (STTQELQSTQ) show a composition bias toward low complexity. The disordered stretch occupies residues 66–86 (STTQELQSTQPIAVRQQPRAA). Positions 70 to 253 (ELQSTQPIAV…KEQGCIISIK (184 aa)) constitute a Velvet domain. The short motif at 211-218 (FPTLTEIK) is the Nuclear localization signal element. A compositionally biased stretch (basic and acidic residues) spans 254–267 (KGNERARPRGADGR). Residues 254-273 (KGNERARPRGADGRSDDEDD) are disordered.

This sequence belongs to the velvet family. VosA subfamily. Forms a heterodimeric complex with velB; the formation of the velB-vosA complex is light-dependent.

The protein resides in the nucleus. Its function is as follows. Component of the velB-vosA heterodimeric complex that plays a dual role in activating genes associated with spore maturation and repressing certain development-associated genes. The complex binds DNA through the DNA-binding domain of vosA that recognizes an 11-nucleotide consensus sequence 5'-CTGGCCGCGGC-3' consisting of two motifs in the promoters of key developmental regulatory genes. Positively regulates the expression of wetA and represses abaA and brlA. Acts as a crucial regulator of both conidiation capacity and conidial quality. Responsible for the synthesis and accumulation of intracellular trehalose. This is Spore development regulator vosA from Beauveria bassiana (strain ARSEF 2860) (White muscardine disease fungus).